The following is a 245-amino-acid chain: Probable phosphatase KPK_3500 (245 aa).

Zn(2+) is bound by residues H7, H9, H15, H40, E73, H101, H131, D192, and H194.

The protein belongs to the PHP family. In terms of assembly, homotrimer. It depends on Zn(2+) as a cofactor.

The chain is Probable phosphatase KPK_3500 from Klebsiella pneumoniae (strain 342).